The following is a 317-amino-acid chain: MKVLWAALLVTFLAGCQAKVEQAVETEPEPELRQQTEWQSGQRWELALGRFWDYLRWVQTLSEQVQEELLSSQVTQELRALMDETMKELKAYKSELEEQLTPVAEETRARLSKELQAAQARLGADMEDVCGRLVQYRGEVQAMLGQSTEELRVRLASHLRKLRKRLLRDADDLQKRLAVYQAGAREGAERGLSAIRERLGPLVEQGRVRAATVGSLAGQPLQERAQAWGERLRARMEEMGSRTRDRLDEVKEQVAEVRAKLEEQAQQIRLQAEAFQARLKSWFEPLVEDMQRQWAGLVEKVQAAVGTSAAPVPSDNH.

Residues 1-18 form the signal peptide; the sequence is MKVLWAALLVTFLAGCQA. 2 O-linked (GalNAc...) threonine glycosylation sites follow: Thr26 and Thr36. 8 repeat units span residues 80–101, 102–123, 124–145, 146–167, 168–189, 190–211, 212–233, and 234–255. Positions 80–255 are 8 X 22 AA approximate tandem repeats; it reads ALMDETMKEL…RLDEVKEQVA (176 aa). N-linked (Glc) (glycation) lysine glycosylation is present at Lys93. Residue Met143 is modified to Methionine sulfoxide. Ser147 is modified (phosphoserine; by FAM20C). The segment at 158-168 is LDL and other lipoprotein receptors binding; that stretch reads HLRKLRKRLLR. Residue 162-165 participates in heparin binding; sequence LRKR. The segment at 210 to 290 is lipid-binding and lipoprotein association; that stretch reads AATVGSLAGQ…SWFEPLVEDM (81 aa). Thr212 carries an O-linked (GalNAc...) threonine glycan. 229-236 serves as a coordination point for heparin; the sequence is GERLRARM. Positions 266–317 are homooligomerization; that stretch reads QQIRLQAEAFQARLKSWFEPLVEDMQRQWAGLVEKVQAAVGTSAAPVPSDNH. Residues 278–290 are specificity for association with VLDL; sequence RLKSWFEPLVEDM. An O-linked (GalNAc...) threonine glycan is attached at Thr307. O-linked (GalNAc...) serine glycans are attached at residues Ser308 and Ser314.

It belongs to the apolipoprotein A1/A4/E family. Homotetramer. May interact with ABCA1; functionally associated with ABCA1 in the biogenesis of HDLs. May interact with APP/A4 amyloid-beta peptide; the interaction is extremely stable in vitro but its physiological significance is unclear. May interact with MAPT. May interact with MAP2. In the cerebrospinal fluid, interacts with secreted SORL1. Interacts with PMEL; this allows the loading of PMEL luminal fragment on ILVs to induce fibril nucleation. In terms of assembly, (Microbial infection) Interacts with hepatitis C virus (HCV) envelope glycoprotein E2; this interaction is required for HCV infectivity and production. APOE exists as multiple glycosylated and sialylated glycoforms within cells and in plasma. The extent of glycosylation and sialylation are tissue and context specific. Plasma APOE undergoes desialylation and is less glycosylated and sialylated than the cellular form. Glycosylation is not required for proper expression and secretion. O-glycosylated with core 1 or possibly core 8 glycans. Thr-307 and Ser-314 are minor glycosylation sites compared to Ser-308. Post-translationally, glycated in plasma VLDL of normal subjects, and of hyperglycemic diabetic patients at a higher level (2-3 fold). In terms of processing, phosphorylated by FAM20C in the extracellular medium. Undergoes C-terminal proteolytic processing in neurons. C-terminally truncated APOE has a tendency to form neurotoxic intracellular neurofibrillary tangle-like inclusions in neurons. Produced by several tissues and cell types and mainly found associated with lipid particles in the plasma, the interstitial fluid and lymph. Mainly synthesized by liver hepatocytes. Significant quantities are also produced in brain, mainly by astrocytes and glial cells in the cerebral cortex, but also by neurons in frontal cortex and hippocampus. It is also expressed by cells of the peripheral nervous system. Also expressed by adrenal gland, testis, ovary, skin, kidney, spleen and adipose tissue and macrophages in various tissues.

It localises to the secreted. Its subcellular location is the extracellular space. The protein resides in the extracellular matrix. It is found in the extracellular vesicle. The protein localises to the endosome. It localises to the multivesicular body. Functionally, APOE is an apolipoprotein, a protein associating with lipid particles, that mainly functions in lipoprotein-mediated lipid transport between organs via the plasma and interstitial fluids. APOE is a core component of plasma lipoproteins and is involved in their production, conversion and clearance. Apolipoproteins are amphipathic molecules that interact both with lipids of the lipoprotein particle core and the aqueous environment of the plasma. As such, APOE associates with chylomicrons, chylomicron remnants, very low density lipoproteins (VLDL) and intermediate density lipoproteins (IDL) but shows a preferential binding to high-density lipoproteins (HDL). It also binds a wide range of cellular receptors including the LDL receptor/LDLR, the LDL receptor-related proteins LRP1, LRP2 and LRP8 and the very low-density lipoprotein receptor/VLDLR that mediate the cellular uptake of the APOE-containing lipoprotein particles. Finally, APOE also has a heparin-binding activity and binds heparan-sulfate proteoglycans on the surface of cells, a property that supports the capture and the receptor-mediated uptake of APOE-containing lipoproteins by cells. A main function of APOE is to mediate lipoprotein clearance through the uptake of chylomicrons, VLDLs, and HDLs by hepatocytes. APOE is also involved in the biosynthesis by the liver of VLDLs as well as their uptake by peripheral tissues ensuring the delivery of triglycerides and energy storage in muscle, heart and adipose tissues. By participating in the lipoprotein-mediated distribution of lipids among tissues, APOE plays a critical role in plasma and tissues lipid homeostasis. APOE is also involved in two steps of reverse cholesterol transport, the HDLs-mediated transport of cholesterol from peripheral tissues to the liver, and thereby plays an important role in cholesterol homeostasis. First, it is functionally associated with ABCA1 in the biogenesis of HDLs in tissues. Second, it is enriched in circulating HDLs and mediates their uptake by hepatocytes. APOE also plays an important role in lipid transport in the central nervous system, regulating neuron survival and sprouting. APOE is also involved in innate and adaptive immune responses, controlling for instance the survival of myeloid-derived suppressor cells. Binds to the immune cell receptor LILRB4. APOE may also play a role in transcription regulation through a receptor-dependent and cholesterol-independent mechanism, that activates MAP3K12 and a non-canonical MAPK signal transduction pathway that results in enhanced AP-1-mediated transcription of APP. (Microbial infection) Through its interaction with HCV envelope glycoprotein E2, participates in the attachment of HCV to HSPGs and other receptors (LDLr, VLDLr, and SR-B1) on the cell surface and to the assembly, maturation and infectivity of HCV viral particles. This interaction is probably promoted via the up-regulation of cellular autophagy by the virus. This Homo sapiens (Human) protein is Apolipoprotein E.